The primary structure comprises 466 residues: MSFNDKNFMLKNEPAKELYVKIAELPIYDFHCHLDPKEIFEDKVYEDIVDLWLGGDHYKWRLMRANGISEEEITGFASKLDKFKAWARTLERAFGNPLYHWSHLELRQVFGIEELLTEENAERLYHQLNTYLQEHQISPRKLIADARVAFIGTTDHPLDNLEWHKRLAEDSPIDTVVAPTFRPDEAFIEHRNFNLFIKRLEEVTEVAVRDFASFVEALGQRVSYFAQHGCRASDISFTAITYEEATLEELNDILLARMVGKEVGQSGINKWQTAIFRELCRMYKKHGFVTQVHFGALRNNHTGLFEKLGADVGVDSIGDQTCLTGNLNRLLDNLVKENALPKMIWYNLNPGYNIALANTLANFQANEEGRRSQLQFGAGWWFNDTKLGMIDQMNAYAEQGMLANFVGMLTDSRSFLSYQRHDYFRRILATYVGQWIVDEEVPEDYDRLGQFVEAISYYNAKEFFEQ.

Belongs to the metallo-dependent hydrolases superfamily. Uronate isomerase family.

The catalysed reaction is D-glucuronate = D-fructuronate. The enzyme catalyses aldehydo-D-galacturonate = keto-D-tagaturonate. Its pathway is carbohydrate metabolism; pentose and glucuronate interconversion. This is Uronate isomerase from Streptococcus pneumoniae (strain 70585).